The chain runs to 313 residues: Ribosomal RNA small subunit methyltransferase H (313 aa).

S-adenosyl-L-methionine is bound by residues 31-33 (GGH), Asp51, Phe77, Asp95, and Gln102.

Belongs to the methyltransferase superfamily. RsmH family.

It is found in the cytoplasm. The catalysed reaction is cytidine(1402) in 16S rRNA + S-adenosyl-L-methionine = N(4)-methylcytidine(1402) in 16S rRNA + S-adenosyl-L-homocysteine + H(+). Specifically methylates the N4 position of cytidine in position 1402 (C1402) of 16S rRNA. The chain is Ribosomal RNA small subunit methyltransferase H from Xylella fastidiosa (strain M12).